Consider the following 206-residue polypeptide: Ras-related protein RABG3f (206 aa).

15-23 (GDSGVGKTS) serves as a coordination point for GTP. The Effector region motif lies at 37–45 (YKATIGADF). GTP is bound by residues 63-67 (DTAGQ), 125-128 (NKVD), and 158-159 (SA). Residues Cys-204 and Cys-206 are each lipidated (S-geranylgeranyl cysteine). Cys-206 carries the cysteine methyl ester modification.

This sequence belongs to the small GTPase superfamily. Rab family. In terms of assembly, interacts with VPS35A.

The protein resides in the endosome membrane. It is found in the vacuole membrane. The protein localises to the prevacuolar compartment membrane. With respect to regulation, regulated by guanine nucleotide exchange factors (GEFs) which promote the exchange of bound GDP for free GTP. Regulated by the MON1-CCZ1 complex which serves as a link between Rab5 and Rab7 protein families in PVCs and mediates PVC maturation. Essential for trafficking from prevacuolar compartments to vacuoles. Involved in the trafficking of newly synthesized protein to vacuoles. Essential for plant growth. Participates in the recruitment of the core retromer components to the endosomal membrane by interacting with VPS35A. This chain is Ras-related protein RABG3f (RABG3F), found in Arabidopsis thaliana (Mouse-ear cress).